The primary structure comprises 548 residues: Membrane protein insertase YidC (548 aa).

The next 5 helical transmembrane spans lie at 6–26 (NLIL…WESD), 357–377 (NWGV…FPLT), 424–444 (LGGC…YWAL), 455–475 (FALW…PILM), and 503–523 (PIIF…YWLV).

Belongs to the OXA1/ALB3/YidC family. Type 1 subfamily. In terms of assembly, interacts with the Sec translocase complex via SecD. Specifically interacts with transmembrane segments of nascent integral membrane proteins during membrane integration.

The protein resides in the cell inner membrane. Required for the insertion and/or proper folding and/or complex formation of integral membrane proteins into the membrane. Involved in integration of membrane proteins that insert both dependently and independently of the Sec translocase complex, as well as at least some lipoproteins. Aids folding of multispanning membrane proteins. The chain is Membrane protein insertase YidC from Aeromonas hydrophila subsp. hydrophila (strain ATCC 7966 / DSM 30187 / BCRC 13018 / CCUG 14551 / JCM 1027 / KCTC 2358 / NCIMB 9240 / NCTC 8049).